A 638-amino-acid polypeptide reads, in one-letter code: Influenza virus NS1A-binding protein homolog (638 aa).

The 68-residue stretch at 32–99 (CDVKLQVCGH…AYTSQLKAET (68 aa)) folds into the BTB domain. Residues 134–233 (GISCRNFVNT…YYSADHKLLD (100 aa)) enclose the BACK domain. Residues 251 to 273 (IQKKSPRENNHKNLISSSSGSLS) are disordered. 6 Kelch repeats span residues 365 to 411 (KLIA…VLMD), 412 to 459 (HLYV…ALNG), 461 to 508 (LYVV…ELGN), 509 to 555 (KIYI…VYDG), 557 to 602 (LLVV…AVGN), and 604 to 638 (IYAAGGFDGNEFLNTVEVYNPQTDEWSPFTQLCES).

The protein localises to the cytoplasm. Its subcellular location is the cytoskeleton. It localises to the nucleus. Functionally, plays a role in cell division and in the dynamic organization of the actin skeleton as a stabilizer of actin filaments by association with F-actin through Kelch repeats. This chain is Influenza virus NS1A-binding protein homolog (ivns1abp), found in Xenopus laevis (African clawed frog).